Here is a 270-residue protein sequence, read N- to C-terminus: Imidazole glycerol phosphate synthase subunit HisF (270 aa).

Catalysis depends on residues Asp11 and Asp135.

This sequence belongs to the HisA/HisF family. In terms of assembly, heterodimer of HisH and HisF.

Its subcellular location is the cytoplasm. It carries out the reaction 5-[(5-phospho-1-deoxy-D-ribulos-1-ylimino)methylamino]-1-(5-phospho-beta-D-ribosyl)imidazole-4-carboxamide + L-glutamine = D-erythro-1-(imidazol-4-yl)glycerol 3-phosphate + 5-amino-1-(5-phospho-beta-D-ribosyl)imidazole-4-carboxamide + L-glutamate + H(+). It functions in the pathway amino-acid biosynthesis; L-histidine biosynthesis; L-histidine from 5-phospho-alpha-D-ribose 1-diphosphate: step 5/9. In terms of biological role, IGPS catalyzes the conversion of PRFAR and glutamine to IGP, AICAR and glutamate. The HisF subunit catalyzes the cyclization activity that produces IGP and AICAR from PRFAR using the ammonia provided by the HisH subunit. The sequence is that of Imidazole glycerol phosphate synthase subunit HisF from Haloquadratum walsbyi (strain DSM 16790 / HBSQ001).